The chain runs to 650 residues: Cytosolic Fe-S cluster assembly factor NAR1 (650 aa).

Residues Cys-22, Cys-81, Cys-84, Cys-87, Cys-215, Cys-270, Cys-480, and Cys-484 each contribute to the [4Fe-4S] cluster site.

Belongs to the NARF family.

Component of the cytosolic Fe/S protein assembly machinery. Required for maturation of extramitochondrial Fe/S proteins. May play a role in the transfer of pre-assembled Fe/S clusters to target apoproteins. The protein is Cytosolic Fe-S cluster assembly factor NAR1 (NAR1) of Cryptococcus neoformans var. neoformans serotype D (strain JEC21 / ATCC MYA-565) (Filobasidiella neoformans).